Consider the following 670-residue polypeptide: MGKSEKEVATHGVRCFSKIKAFLLALTCAYVSKSLSGTYMNSMLTQIERQFGIPTSVVGLINGSFEIGNLLLIIFVSYFGTKLHRPIMIGVGCAVMGLGCFLISIPHFLMGRYEYETTILPTSNLSSNSFVCTENRTQTLKPTQDPTECVKEMKSLMWIYVLVGNIIRGMGETPIMPLGISYIEDFAKSENSPLYIGILETGMTIGPLIGLLLGSSCANIYVDTGSVNTDDLTITPTDTRWVGAWWIGFLVCAGVNILTSIPFFFFPKTLLKEGLQDNGDGTENAKEEKHREKIKEENRGITKDFFLFMKSLSCNPIYMIFILISVIQVNAFINSFTFMPKYLEQQYGKSTAEIVFLMGLYMLPPICLGYLIGGLIMKKFKITVKKAAYIGFWLSLTEYLLSFVSYIMTCDNFPVAGLTTSYEGVQHPLYVENNVLADCNTKCSCLTNTWDPVCGDNGLSYMSACLAGCEKSVGTGTNMVFQNCSCIQSSGNASAVLGLCDKGPECANKLQYFLIISIIGCFIFSLGAIPGYMVLLRCMKSEEKSLGVGLHTFCMRILGGIPAPIYFGALIDRTCLHWGTLKCGEPGACRMYDINSFRRIYLGLPAALRGASFLPALFILILMRKFQFPGDIDSSDTDPAEMKLTAKESKCTNVHRSPTMQNDGERKTKL.

Residues 1-20 (MGKSEKEVATHGVRCFSKIK) are Cytoplasmic-facing. Residues 21 to 40 (AFLLALTCAYVSKSLSGTYM) form a helical membrane-spanning segment. Topologically, residues 41 to 59 (NSMLTQIERQFGIPTSVVG) are extracellular. A helical transmembrane segment spans residues 60 to 80 (LINGSFEIGNLLLIIFVSYFG). The Cytoplasmic segment spans residues 81–86 (TKLHRP). A helical membrane pass occupies residues 87–111 (IMIGVGCAVMGLGCFLISIPHFLMG). The Extracellular portion of the chain corresponds to 112-155 (RYEYETTILPTSNLSSNSFVCTENRTQTLKPTQDPTECVKEMKS). N124 and N135 each carry an N-linked (GlcNAc...) asparagine glycan. Residues 156-184 (LMWIYVLVGNIIRGMGETPIMPLGISYIE) form a helical membrane-spanning segment. Topologically, residues 185-203 (DFAKSENSPLYIGILETGM) are cytoplasmic. The helical transmembrane segment at 204 to 224 (TIGPLIGLLLGSSCANIYVDT) threads the bilayer. Topologically, residues 225-242 (GSVNTDDLTITPTDTRWV) are extracellular. The helical transmembrane segment at 243 to 267 (GAWWIGFLVCAGVNILTSIPFFFFP) threads the bilayer. Over 268-311 (KTLLKEGLQDNGDGTENAKEEKHREKIKEENRGITKDFFLFMKS) the chain is Cytoplasmic. A helical membrane pass occupies residues 312-333 (LSCNPIYMIFILISVIQVNAFI). The Extracellular segment spans residues 334 to 353 (NSFTFMPKYLEQQYGKSTAE). The helical transmembrane segment at 354–377 (IVFLMGLYMLPPICLGYLIGGLIM) threads the bilayer. Residues 378-381 (KKFK) lie on the Cytoplasmic side of the membrane. Residues 382–405 (ITVKKAAYIGFWLSLTEYLLSFVS) form a helical membrane-spanning segment. Residues 406-513 (YIMTCDNFPV…PECANKLQYF (108 aa)) are Extracellular-facing. Residues 433–488 (NNVLADCNTKCSCLTNTWDPVCGDNGLSYMSACLAGCEKSVGTGTNMVFQNCSCIQ) enclose the Kazal-like domain. Intrachain disulfides connect C439-C469, C445-C465, and C454-C486. N483 and N492 each carry an N-linked (GlcNAc...) asparagine glycan. Residues 514–536 (LIISIIGCFIFSLGAIPGYMVLL) traverse the membrane as a helical segment. The Cytoplasmic portion of the chain corresponds to 537 to 545 (RCMKSEEKS). The chain crosses the membrane as a helical span at residues 546–571 (LGVGLHTFCMRILGGIPAPIYFGALI). Topologically, residues 572 to 605 (DRTCLHWGTLKCGEPGACRMYDINSFRRIYLGLP) are extracellular. A helical transmembrane segment spans residues 606 to 623 (AALRGASFLPALFILILM). Over 624–670 (RKFQFPGDIDSSDTDPAEMKLTAKESKCTNVHRSPTMQNDGERKTKL) the chain is Cytoplasmic. Phosphoserine occurs at positions 634 and 635. Residues 649-670 (SKCTNVHRSPTMQNDGERKTKL) are disordered. Polar residues predominate over residues 651–662 (CTNVHRSPTMQN).

It belongs to the organo anion transporter (TC 2.A.60) family. As to expression, highly expressed in brain and liver. Detected at very low levels in heart and lung.

Its subcellular location is the cell membrane. The catalysed reaction is estrone 3-sulfate(out) = estrone 3-sulfate(in). It catalyses the reaction taurocholate(out) = taurocholate(in). The enzyme catalyses prostaglandin E2(out) = prostaglandin E2(in). It carries out the reaction L-thyroxine(out) = L-thyroxine(in). Its function is as follows. Mediates the Na(+)-independent transport of organic anions such as taurocholate, cholate, 17-beta-glucuronosyl estradiol, prostaglandin E2, estrone 3-sulfate, L-thyroxine (T4), the cardiac glycosides ouabain and digoxin and thyroid hormones. Shows a pH-sensitive substrate specificity which may be ascribed to the protonation state of the binding site and leads to a stimulation of substrate transport in an acidic microenvironment. Hydrogencarbonate/HCO3(-) acts as the probable counteranion that exchanges for organic anions. In Mus musculus (Mouse), this protein is Solute carrier organic anion transporter family member 1A4 (Slco1a4).